Here is a 223-residue protein sequence, read N- to C-terminus: uncharacterized protein (223 aa).

Residues 1-12 (MFRSLVRKTTPL) constitute a mitochondrion transit peptide.

It localises to the mitochondrion. This is an uncharacterized protein from Candida albicans (strain WO-1) (Yeast).